We begin with the raw amino-acid sequence, 425 residues long: MLNIKWIRENKELFDEKLSQRFIEPMSSKIAMLDGKKRKITSLIQEFQHARKVKSKILGNMASKSGEEFEGLQRDVKHINEKLEALEQELNNNNELNELLNMFPNIPDEEVPYGMDESMNKLVRTYGETNPNALNKQHFELGIKLNLMDFEQTAKISGTRFVTLKGDLAKLERALINFMIDVHTKEWDFFEISPPVLVRDNAMYNAGQLPKFAEESFATTNGYRLIPTAEVSLVNMVADTIIPREKLPIRYVAYTPCFRSEAGSSGKDTRGMIRLHQFGKVELVSITTPEESTNEHEYITNASETILQKLNLPYRVMLLCTGDMGFAAKKTYDIEIWLPGQKQYREIASCSNCGDFQARRMKARYKEFGSNETTLVHTLNASGLPIGRTMVAILENYQNEDGSITIPDVLINYMGGLQKIIAYSE.

L-serine is bound at residue 228–230; sequence TAE. 259–261 contributes to the ATP binding site; sequence RSE. Residue Glu-282 participates in L-serine binding. An ATP-binding site is contributed by 346–349; it reads EIAS. Ser-382 lines the L-serine pocket.

It belongs to the class-II aminoacyl-tRNA synthetase family. Type-1 seryl-tRNA synthetase subfamily. In terms of assembly, homodimer. The tRNA molecule binds across the dimer.

It is found in the cytoplasm. The catalysed reaction is tRNA(Ser) + L-serine + ATP = L-seryl-tRNA(Ser) + AMP + diphosphate + H(+). It catalyses the reaction tRNA(Sec) + L-serine + ATP = L-seryl-tRNA(Sec) + AMP + diphosphate + H(+). Its pathway is aminoacyl-tRNA biosynthesis; selenocysteinyl-tRNA(Sec) biosynthesis; L-seryl-tRNA(Sec) from L-serine and tRNA(Sec): step 1/1. Its function is as follows. Catalyzes the attachment of serine to tRNA(Ser). Is also able to aminoacylate tRNA(Sec) with serine, to form the misacylated tRNA L-seryl-tRNA(Sec), which will be further converted into selenocysteinyl-tRNA(Sec). The polypeptide is Serine--tRNA ligase (Rickettsia africae (strain ESF-5)).